A 314-amino-acid polypeptide reads, in one-letter code: Peroxidase 2 (314 aa).

An N-terminal signal peptide occupies residues 1–23; the sequence is MASASSVSLMLLVAAAMASAASA. Gln24 is modified (pyrrolidone carboxylic acid). 4 cysteine pairs are disulfide-bonded: Cys34/Cys109, Cys67/Cys72, Cys115/Cys310, and Cys194/Cys219. The active-site Proton acceptor is His65. The Ca(2+) site is built by Asp66, Val69, Gly71, Asp73, and Ser75. N-linked (GlcNAc...) asparagine glycosylation occurs at Asn148. Residue Pro157 coordinates substrate. Asn169 carries an N-linked (GlcNAc...) asparagine glycan. A heme b-binding site is contributed by His187. Thr188 serves as a coordination point for Ca(2+). N-linked (GlcNAc...) asparagine glycosylation is present at Asn203. Positions 234, 237, and 242 each coordinate Ca(2+). Residues Asn274 and Asn309 are each glycosylated (N-linked (GlcNAc...) asparagine).

This sequence belongs to the peroxidase family. Classical plant (class III) peroxidase subfamily. Requires Ca(2+) as cofactor. Heme b is required as a cofactor.

Its subcellular location is the secreted. The enzyme catalyses 2 a phenolic donor + H2O2 = 2 a phenolic radical donor + 2 H2O. Functionally, removal of H(2)O(2), oxidation of toxic reductants, biosynthesis and degradation of lignin, suberization, auxin catabolism, response to environmental stresses such as wounding, pathogen attack and oxidative stress. These functions might be dependent on each isozyme/isoform in each plant tissue. This is Peroxidase 2 (PRX112) from Oryza sativa subsp. japonica (Rice).